The primary structure comprises 72 residues: Translation initiation factor IF-1 (72 aa).

One can recognise an S1-like domain in the interval 1 to 72 (MSKEDMIEFS…TKGRITFRFK (72 aa)).

Belongs to the IF-1 family. As to quaternary structure, component of the 30S ribosomal translation pre-initiation complex which assembles on the 30S ribosome in the order IF-2 and IF-3, IF-1 and N-formylmethionyl-tRNA(fMet); mRNA recruitment can occur at any time during PIC assembly.

The protein localises to the cytoplasm. In terms of biological role, one of the essential components for the initiation of protein synthesis. Stabilizes the binding of IF-2 and IF-3 on the 30S subunit to which N-formylmethionyl-tRNA(fMet) subsequently binds. Helps modulate mRNA selection, yielding the 30S pre-initiation complex (PIC). Upon addition of the 50S ribosomal subunit IF-1, IF-2 and IF-3 are released leaving the mature 70S translation initiation complex. In Acidiphilium cryptum (strain JF-5), this protein is Translation initiation factor IF-1.